Reading from the N-terminus, the 96-residue chain is Small ribosomal subunit protein bS16 (96 aa).

Belongs to the bacterial ribosomal protein bS16 family.

The polypeptide is Small ribosomal subunit protein bS16 (Vesicomyosocius okutanii subsp. Calyptogena okutanii (strain HA)).